Here is a 112-residue protein sequence, read N- to C-terminus: MSAEVPEAASAEEQKEMEDKVTSPEKAEEAKLKARYPHLGQKPGGSDFLRKRLQKGQKYFDSGDYNMAKAKMKNKQLPTAAPDKTEVTGDHIPTPQDLPQRKPSLVASKLAG.

Position 1 is an N-acetylmethionine (methionine 1). A compositionally biased stretch (low complexity) spans 1-11 (MSAEVPEAASA). The disordered stretch occupies residues 1 to 49 (MSAEVPEAASAEEQKEMEDKVTSPEKAEEAKLKARYPHLGQKPGGSDFL). Position 2 is an N-acetylserine (serine 2). Phosphoserine is present on residues serine 2 and serine 23. Basic and acidic residues predominate over residues 12 to 32 (EEQKEMEDKVTSPEKAEEAKL). Residues serine 62 and serine 104 each carry the phosphoserine; by GWL modification. Positions 73–112 (KNKQLPTAAPDKTEVTGDHIPTPQDLPQRKPSLVASKLAG) are disordered. Serine 104 carries the post-translational modification Phosphoserine; by PKA. Lysine 109 carries the N6-acetyllysine modification.

This sequence belongs to the endosulfine family. In terms of assembly, interacts (when phosphorylated at Ser-62) with PPP2R2D. Interacts with SNCA. Interacts with PPP2R2A; the interaction is direct and this interaction inhibits PP2A activity. In terms of processing, phosphorylation at Ser-62 by MASTL/GWL during mitosis is essential for interaction with PPP2R2D (PR55-delta) and subsequent inactivation of PP2A. Phosphorylated by PKA.

The protein localises to the cytoplasm. Functionally, protein phosphatase inhibitor that specifically inhibits protein phosphatase 2A (PP2A) during mitosis. Inhibition of PP2A is enhanced when ARPP19 is phosphorylated. When phosphorylated at Ser-62 during mitosis, specifically interacts with PPP2R2D (PR55-delta) and inhibits its activity, leading to inactivation of PP2A, an essential condition to keep cyclin-B1-CDK1 activity high during M phase. May indirectly enhance GAP-43 expression. The polypeptide is cAMP-regulated phosphoprotein 19 (ARPP19) (Homo sapiens (Human)).